The primary structure comprises 2123 residues: MPYFNKSKKNEIRPEKSKEEVGGVLFDDSAIHENIDHNMEPQTGDSVATFPDNSDEVVGGDLAALRARLQATIGDYLPEFYEFQQTGRNILYPKPVDIKALQARLNSMPITAWIQPLQQQLEQAGNAFLDRFRLFRKEKDWHNNALEFVKFRLAVKETGWDEQQTRDYNEALKHANRLSGYLSGTLDLIQHLNDNPERQTSWEAVRKTSYDMLLNELLPVDAENNGNQYTAKIRGNLTKNHPDNIKFNTIVNSVTRDERMASEALSAETKGLSARLLSGIALTRNSAEKIDKKSETSGITRDIVALCQVLQGVIKTIKRRGEYIQPLTDWQPSEHKLPGQKEELTKAETVKRELVKSRKVMMQKVQGAKTILGVLSDKTNKNRHRITQTLPYSANPDTNTVSRKTNEAVFRAGIMLLDKIQQTTSGIHKASLASRPLQHAVTQYSALEQMSSGMPSNRILDAKLRSESGRWQEKAEKSKKQLQHILREITALAEEHLKHKFMSALRDELKRAPETLASNNIISNFDTRAKIVVEGLASIEIGMNQSVVRLAGHGEAGRKDLDEQVVAWLQRLERIKGELKTDITQATGQSINNFSRQGMLARRMGEWNEAEKQRYLAALSTEDRAVAEMQYNTLFFEVIQHYLPLLSKETDPQGERLLQRLRLEVSNAAEGTTVYPATMAEILAGMKSTEQAIRDWSGRKLLRVVFLAACLEGVKLMPKLAALPLRVAIKFVITGAKVAWATHKGQQGIRGGEGDVDDEIGEYAKRSFKTASVKVVLSLPPGLATMLGVASIALDVYEGGLKGAGGKIAKNIVGDAPWRALNQGSKIAAEAYTTASMNAALKEGGANPVSHSSTLQQQMDAKPFFDNSDQDADQPRVRRKREMTDEIMLSDGSSRSEAKALPDENELDTDQSKSRPESALAVETLQSEHFDFDRGIRYQDFSDEQKKQTYLHGIKFVLLQIENDGHFAQNIRNNAYLARIGAKLAVPVDIYRYKLNNTFLLPDEIDSKSGVLIRLDSEIPYYYVSEGKDLLENIAWAMPYNAANRGPLKFSLDPGEVTSSHSGVDILNNIRSERFKFETYFNYNAPEAMSIESLSAQLANTIEADYKFKNTSPTNKILISRAIVGAHIPDPGVRATQGEYHIEFDSDELAPAKYLRSFARPFSTLSGEMQLISSSIKGETIQETELHVHQAEYIGSWVDATAGAIISFTPEGWFLNTAQSAAEITADLTEGKDPDPLAVAGLLVGIIPGGKIAAKVGKFTRIGGKTVKYGLILGNKSVDLAIVGKSIKTAVDTGEPLAIYQAFLASGMSVKNSYDIAKNMSSELKISKKIEESARLRKLKALQKNTYKYSMNSKMPVRKFRVGQTDLLGKIHKGEIKISRNNGTTWEKGNQLHLLAYRLQNAGGGRLLPDVFRDKIVIGEYSFKRVKYNQKKLNEMMRIAKMYTPTSNSTERIAKLQQNYKTGKEMSHAPQYDTYNDLSLGEKLDLFINSNTDATTRGVLAGKINESITNINLYETAKGVDAWKTSANKATDVVLAPQNIFLKGRAGECLPESILMGWALQSGQDTKLAKKLMNIHSSSNIAANPLYKSLVELHSDGNASRFGESVISDINMKMLSGAESKLFPTENSSVRVDIPEHTMLISKVNKDGKIKYVFYDPNYGMAYFNKYKEMISFFKKKIKGYDTPKRSTSFRQLDYSHLSDIKIKGKNLNEIIDGEIPQIFRQEDVNLEGITPQDGIYRMLGTHQQENNTYIKSQNNIYQVEWDQTTNTWRVFDSANTNRSRITVPIKRDTDGEWFKYTETGLKGGGLFDEIKNNWLQRKRFKNLQDFNDIVDFEENKWPSEPINKDIHMIWVGTRNISEKNIGLSLETARKNSDYNTTIIYDSGIAGYESAKDFMTEKFKDSKVTLVDFRKKSYFHQLQQEPSFPYYEQAIRDKKYAQASDILRLLVLKYEGGIYKDIDDVQVKAFGSLAFPKGIGVMREYAPEAGKTTAFPNTPIAATKNNPVVNKTLELAVENYHRGETNVLKLAGPDVFTESLYQEIPGMRPQVLGAQLDQFELAKRQALGMRLEKPKGFADEKLTLQEKAKIRQPYEAIRGLSGYVDNGADHSWVTDMPGNSTQSSGLS.

The tract at residues 864–919 (FFDNSDQDADQPRVRRKREMTDEIMLSDGSSRSEAKALPDENELDTDQSKSRPESA) is disordered. Residues 1771–2123 (VFDSANTNRS…GNSTQSSGLS (353 aa)) are tyrosine glycosyltransferase. UDP-N-acetyl-alpha-D-glucosamine is bound by residues 1850 to 1852 (IWV) and 1940 to 1941 (SD). Positions 1957 and 1959 each coordinate a divalent metal cation. A DxDD motif motif is present at residues 1957 to 1960 (DIDD). N1993 lines the UDP-N-acetyl-alpha-D-glucosamine pocket.

It depends on a divalent metal cation as a cofactor.

The protein resides in the secreted. Its subcellular location is the host cell membrane. The catalysed reaction is L-tyrosyl-[protein] + UDP-N-acetyl-alpha-D-glucosamine = O-(N-acetyl-alpha-D-glucosaminyl)-L-tyrosyl-[protein] + UDP + H(+). Its function is as follows. Toxin component of the prophage tail-derived protein translocation system Afp, which is the causative agent of enteric redmouth disease in salmonid fish species. Mono-O-GlcNAcylates the small GTPase RhoA in eukaryotic host cells at Tyr-34, using UDP-N-acetylglucosamine (UDP-GlcNAc) as the sugar donor. Glycosylation of RhoA results in impaired effector and regulator interaction and inactivation of downstream RhoA signaling which leads to actin filament depolymerization and blocks cytokinesis and gastrulation during zebrafish embryo development. To a lesser extent, is also able to glycosylate other Rho family GTPases (RhoB, RhoC, Rac1, Rac2, Rac3, and Cdc42) in vitro at a switch I tyrosine residue, but not Ras proteins. This chain is Toxin Afp18, found in Yersinia ruckeri serotype O1 (strain ATCC 29473 / DSM 18506 / JCM 15110 / CCUG 14190 / NCIMB 2194 / NCTC 12986 / 2396-61).